We begin with the raw amino-acid sequence, 1603 residues long: Gag-Pol polyprotein (1603 aa).

Residues 128–141 show a composition bias toward basic and acidic residues; that stretch reads VGETTVQRDAKMAP. A disordered region spans residues 128–150; the sequence is VGETTVQRDAKMAPEETATPKTV. A PPXY motif motif is present at residues 172-175; that stretch reads PPPY. The LYPX(n)L motif motif lies at 180 to 184; that stretch reads LYPSL. Residues 181–215 form a disordered region; that stretch reads YPSLAGVGEQQGQGGDTPRGAEQPRAEPGHAGLAP. The Nuclear export signal motif lies at 219–229; it reads LTDWARIREEL. 2 CCHC-type zinc fingers span residues 507 to 524 and 533 to 550; these read RLCY…QCPK and ERCQ…QCRR. The disordered stretch occupies residues 544–571; that stretch reads NAKQCRRRDSNQGQRPGRGLSSGPWPVS. A Peptidase A2 domain is found at 609–690; it reads ITALLDSGAD…VRGSILGRDC (82 aa). Asp614 functions as the For protease activity; shared with dimeric partner in the catalytic mechanism. The Reverse transcriptase domain maps to 750–938; that stretch reads LQLGHIEPSL…PGVQYLGYKL (189 aa). Mg(2+)-binding residues include Asp815, Asp890, Asp891, Asp1158, Glu1192, Asp1213, and Asp1272. Residues 1149-1280 form the RNase H type-1 domain; it reads PVPGPTVFTD…ADSQATFQAY (132 aa). Residues 1280 to 1321 form an Integrase-type zinc finger; it reads YPLREAKDLHTTLHIGPRALSKACNISMQQAREVVQTCPHCN. Zn(2+)-binding residues include His1289, His1293, Cys1317, and Cys1320. In terms of domain architecture, Integrase catalytic spans 1333-1496; the sequence is RGLGPLQIWQ…TPVQKHWRPT (164 aa). 3 residues coordinate Mg(2+): Asp1344, Asp1401, and Glu1437. The segment at residues 1502 to 1550 is a DNA-binding region (integrase-type); the sequence is PPVKIRIETGEWEKGWNVLVWGRGYAAVKNRDTDKVIWVPSRKVKPDIT. The interval 1548 to 1567 is involved in homooctamerization; sequence DITQKDEVTKKDEASPLFAG. Over residues 1549 to 1561 the composition is skewed to basic and acidic residues; that stretch reads ITQKDEVTKKDEA. The interval 1549 to 1603 is disordered; the sequence is ITQKDEVTKKDEASPLFAGSSDWIPWGDEQEGLQEEAASNKQEGPGEDTLAANES.

As to quaternary structure, active as a homodimer. Homodimer. Homomultimer. Homohexamer. In terms of assembly, homodimer; further associates as a homooctamer. As to quaternary structure, heterodimer of alpha and beta subunits. Three forms of RT exist: alpha-alpha (alpha-Pol), beta-beta (beta-Pol), and alpha-beta, with the major form being the heterodimer. Both the polymerase and RNase H active sites are located in the alpha subunit of heterodimeric RT alpha-beta. Mg(2+) is required as a cofactor. Mn(2+) serves as cofactor. Specific enzymatic cleavages in vivo yield mature proteins. In terms of processing, capsid protein p27: The cleavage at the C-terminus is slowly trimmed by the viral protease, sometimes being cut internally thereby generating the short version of the capsid protein and a capsid protein C-terminally extended by 3 amino acids in a ratio of 2:1.

Its subcellular location is the virion. The enzyme catalyses DNA(n) + a 2'-deoxyribonucleoside 5'-triphosphate = DNA(n+1) + diphosphate. It carries out the reaction Endonucleolytic cleavage to 5'-phosphomonoester.. In terms of biological role, capsid protein p27: Self-associates to form the irregular polyhedron core composed of hexamers and pentamers, that encapsulates the genomic RNA-nucleocapsid complex. Assembles as a tube in vitro. Binds to inositol hexakisphosphate (IP6), which allows the assembly of the polyhedral capsid. Its function is as follows. Plays a role in the oligomerization of the Gag polyprotein and in the stabilization of the immature particle. Essential layering element during tube assembly. Allows the cooperative binging of Gag to the host plasma membrane. Functionally, binds strongly to viral nucleic acids and promotes their packaging. Plays a role in the maturation-stabilization of the viral dimeric RNA via highly structured zinc-binding motifs. The aspartyl protease mediates proteolytic cleavages of Gag and Gag-Pol polyproteins during or shortly after the release of the virion from the plasma membrane. Cleavages take place as an ordered, step-wise cascade to yield mature proteins. This process is called maturation. Displays maximal activity during the budding process just prior to particle release from the cell. In terms of biological role, catalyzes viral DNA integration into the host chromosome, by performing a series of DNA cutting and joining reactions. This recombination event is an essential step in the viral replication cycle. Has a strong preference for using the 3'-OH at the viral DNA end as a nucleophile. The sequence is that of Gag-Pol polyprotein (gag-pol) from Rous sarcoma virus subgroup B (strain Schmidt-Ruppin) (RSV-SR-B).